A 157-amino-acid polypeptide reads, in one-letter code: Endoribonuclease YbeY (157 aa).

H121, H125, and D131 together coordinate Zn(2+).

The protein belongs to the endoribonuclease YbeY family. It depends on Zn(2+) as a cofactor.

The protein resides in the cytoplasm. Its function is as follows. Single strand-specific metallo-endoribonuclease involved in late-stage 70S ribosome quality control and in maturation of the 3' terminus of the 16S rRNA. This chain is Endoribonuclease YbeY, found in Salinibacter ruber (strain DSM 13855 / M31).